Reading from the N-terminus, the 207-residue chain is Probable RNA 2'-phosphotransferase (207 aa).

It belongs to the KptA/TPT1 family.

Removes the 2'-phosphate from RNA via an intermediate in which the phosphate is ADP-ribosylated by NAD followed by a presumed transesterification to release the RNA and generate ADP-ribose 1''-2''-cyclic phosphate (APPR&gt;P). May function as an ADP-ribosylase. This is Probable RNA 2'-phosphotransferase from Methanosarcina acetivorans (strain ATCC 35395 / DSM 2834 / JCM 12185 / C2A).